A 391-amino-acid chain; its full sequence is UPF0229 protein BCB4264_A0587 (391 aa).

Over residues 1 to 16 (MGEENQPNYTISQENW) the composition is skewed to polar residues. 2 disordered regions span residues 1 to 31 (MGEENQPNYTISQENWSLHRKGYDDQQRHQE) and 80 to 117 (HVGQGNGDSKVGDVVARDGSGGQKQKGPGKGQGAGDAA). Positions 21 to 31 (KGYDDQQRHQE) are enriched in basic and acidic residues. Residues 98-115 (GSGGQKQKGPGKGQGAGD) are compositionally biased toward gly residues.

The protein belongs to the UPF0229 family.

In Bacillus cereus (strain B4264), this protein is UPF0229 protein BCB4264_A0587.